The following is a 78-amino-acid chain: uncharacterized protein (78 aa).

This is an uncharacterized protein from Archaeoglobus fulgidus (strain ATCC 49558 / DSM 4304 / JCM 9628 / NBRC 100126 / VC-16).